Here is a 423-residue protein sequence, read N- to C-terminus: Site-specific recombinase Flp (423 aa).

A Tyr recombinase Flp-type domain is found at 136–422; sequence GNSHSKKMLK…DYLSSYINRR (287 aa). The O-(3'-phospho-DNA)-tyrosine intermediate role is filled by Y343.

Belongs to the 'phage' integrase family. In terms of assembly, homotetramer.

In terms of biological role, part of the plasmid amplification system, which corrects any decrease in copy number caused by a rare missegregation event. Catalyzes the recombination between the large inverted repetitions of the 2-micron plasmid during plasmid replication. This recombination event changes the direction of one of the two replication forks in the bidirectionally replicating molecule, effectively resulting in multiple rounds of replication from a single initiation event. Binds specifically to the FLP recognition target (FRT) site where it induces DNA to bend. Three types of bend exist. Type I is approximately 60 degrees and results from 1 FLP molecule binding to 1 symmetry element. Type II is &gt;144 degrees and results from FLP molecules binding to symmetry elements a and b. Type III is approximately 65 degrees and results from FLP molecules binding to symmetry elements b and c. The polypeptide is Site-specific recombinase Flp (FLP1) (Saccharomyces cerevisiae (strain ATCC 204508 / S288c) (Baker's yeast)).